A 283-amino-acid polypeptide reads, in one-letter code: Diaminopimelate epimerase (283 aa).

Positions 13, 45, and 65 each coordinate substrate. C74 (proton donor) is an active-site residue. Substrate is bound by residues 75–76 (GN), N156, N190, and 208–209 (ER). C217 acts as the Proton acceptor in catalysis. Substrate is bound at residue 218–219 (GS).

It belongs to the diaminopimelate epimerase family. As to quaternary structure, homodimer.

The protein localises to the cytoplasm. It carries out the reaction (2S,6S)-2,6-diaminopimelate = meso-2,6-diaminopimelate. The protein operates within amino-acid biosynthesis; L-lysine biosynthesis via DAP pathway; DL-2,6-diaminopimelate from LL-2,6-diaminopimelate: step 1/1. Its function is as follows. Catalyzes the stereoinversion of LL-2,6-diaminopimelate (L,L-DAP) to meso-diaminopimelate (meso-DAP), a precursor of L-lysine and an essential component of the bacterial peptidoglycan. This Bartonella quintana (strain Toulouse) (Rochalimaea quintana) protein is Diaminopimelate epimerase.